Here is a 234-residue protein sequence, read N- to C-terminus: MPFEKSKKILIALDYDDQQAALDFVKQLSPDSCRLKVGKEMFTYFGPAFVKELIDLGFDVFLDLKFHDIPNTVAKAVTAAAKMGVWMVNVHASGGFEMMSKAKQALAPFGDKAPLLIAVTVLTSMDETELKRLGVEKTPQEQVIYLAKLAKEAGLDGVVCSAQEAQQLKAELGAGFKLVTPGIRPVGSDAGDQKRIMTPKQAIDAGSDYLVIGRPITQADNPVAVLADVNKSIE.

Substrate is bound by residues D14, K36, D63–T72, T123, R184, Q193, G213, and R214. K65 (proton donor) is an active-site residue.

This sequence belongs to the OMP decarboxylase family. Type 1 subfamily. As to quaternary structure, homodimer.

The enzyme catalyses orotidine 5'-phosphate + H(+) = UMP + CO2. It functions in the pathway pyrimidine metabolism; UMP biosynthesis via de novo pathway; UMP from orotate: step 2/2. Functionally, catalyzes the decarboxylation of orotidine 5'-monophosphate (OMP) to uridine 5'-monophosphate (UMP). The polypeptide is Orotidine 5'-phosphate decarboxylase (Pseudoalteromonas translucida (strain TAC 125)).